The chain runs to 285 residues: Transmembrane protein 53-B (285 aa).

The chain crosses the membrane as a helical span at residues 165-185 (FLALAAFAIMVIILRIVLYPV).

This sequence belongs to the TMEM53 family.

The protein resides in the nucleus outer membrane. In terms of biological role, ensures normal bone formation, through the negative regulation of bone morphogenetic protein (BMP) signaling in osteoblast lineage cells by blocking cytoplasm-nucleus translocation of phosphorylated SMAD proteins. This is Transmembrane protein 53-B (tmem53-b) from Xenopus laevis (African clawed frog).